The primary structure comprises 303 residues: UDP-3-O-acyl-N-acetylglucosamine deacetylase (303 aa).

Zn(2+)-binding residues include H78, H237, and D241. Residue H264 is the Proton donor of the active site.

It belongs to the LpxC family. It depends on Zn(2+) as a cofactor.

It catalyses the reaction a UDP-3-O-[(3R)-3-hydroxyacyl]-N-acetyl-alpha-D-glucosamine + H2O = a UDP-3-O-[(3R)-3-hydroxyacyl]-alpha-D-glucosamine + acetate. It functions in the pathway glycolipid biosynthesis; lipid IV(A) biosynthesis; lipid IV(A) from (3R)-3-hydroxytetradecanoyl-[acyl-carrier-protein] and UDP-N-acetyl-alpha-D-glucosamine: step 2/6. Functionally, catalyzes the hydrolysis of UDP-3-O-myristoyl-N-acetylglucosamine to form UDP-3-O-myristoylglucosamine and acetate, the committed step in lipid A biosynthesis. The protein is UDP-3-O-acyl-N-acetylglucosamine deacetylase of Pseudomonas fluorescens (strain ATCC BAA-477 / NRRL B-23932 / Pf-5).